A 117-amino-acid chain; its full sequence is uncharacterized protein (117 aa).

The first 24 residues, 1–24 (MMTEFGSAMTLVTGLVAYGAYVKS), serve as a signal peptide directing secretion. Residues 42-117 (EKENFNYNNN…NNQIKRRLFD (76 aa)) form a disordered region. The segment covering 46–95 (FNYNNNNNNNNNNNNNNSNNNDNNNNNNSNSNNNNNNNNNNNNNNNNNIN) has biased composition (low complexity). N-linked (GlcNAc...) asparagine glycosylation is found at asparagine 61 and asparagine 72. The span at 96 to 110 (DKQINGTNIFDSNNQ) shows a compositional bias: polar residues.

The protein localises to the secreted. This is an uncharacterized protein from Dictyostelium discoideum (Social amoeba).